The chain runs to 452 residues: Bifunctional protein GlmU (452 aa).

Residues 1–232 (MTTRTSLTIV…EDEVRGINTK (232 aa)) form a pyrophosphorylase region. Residues 11-14 (LAAG), Lys-25, Gln-78, and 83-84 (GT) each bind UDP-N-acetyl-alpha-D-glucosamine. Asp-108 contributes to the Mg(2+) binding site. The UDP-N-acetyl-alpha-D-glucosamine site is built by Gly-144, Glu-158, Asn-173, and Asn-230. Asn-230 lines the Mg(2+) pocket. The segment at 233 to 253 (AQLAEAEAVMQTRLRQAAMTA) is linker. The segment at 254–452 (GVTLISPETI…SARARKPKTS (199 aa)) is N-acetyltransferase. Residues Arg-319 and Lys-337 each contribute to the UDP-N-acetyl-alpha-D-glucosamine site. Residue His-349 is the Proton acceptor of the active site. UDP-N-acetyl-alpha-D-glucosamine-binding residues include Tyr-352 and Asn-363. Acetyl-CoA-binding positions include Ala-366, 372 to 373 (NY), Ser-391, Ser-409, and Arg-426.

In the N-terminal section; belongs to the N-acetylglucosamine-1-phosphate uridyltransferase family. It in the C-terminal section; belongs to the transferase hexapeptide repeat family. Homotrimer. Requires Mg(2+) as cofactor.

The protein resides in the cytoplasm. The catalysed reaction is alpha-D-glucosamine 1-phosphate + acetyl-CoA = N-acetyl-alpha-D-glucosamine 1-phosphate + CoA + H(+). It carries out the reaction N-acetyl-alpha-D-glucosamine 1-phosphate + UTP + H(+) = UDP-N-acetyl-alpha-D-glucosamine + diphosphate. It functions in the pathway nucleotide-sugar biosynthesis; UDP-N-acetyl-alpha-D-glucosamine biosynthesis; N-acetyl-alpha-D-glucosamine 1-phosphate from alpha-D-glucosamine 6-phosphate (route II): step 2/2. The protein operates within nucleotide-sugar biosynthesis; UDP-N-acetyl-alpha-D-glucosamine biosynthesis; UDP-N-acetyl-alpha-D-glucosamine from N-acetyl-alpha-D-glucosamine 1-phosphate: step 1/1. It participates in bacterial outer membrane biogenesis; LPS lipid A biosynthesis. Catalyzes the last two sequential reactions in the de novo biosynthetic pathway for UDP-N-acetylglucosamine (UDP-GlcNAc). The C-terminal domain catalyzes the transfer of acetyl group from acetyl coenzyme A to glucosamine-1-phosphate (GlcN-1-P) to produce N-acetylglucosamine-1-phosphate (GlcNAc-1-P), which is converted into UDP-GlcNAc by the transfer of uridine 5-monophosphate (from uridine 5-triphosphate), a reaction catalyzed by the N-terminal domain. The polypeptide is Bifunctional protein GlmU (Rhodopseudomonas palustris (strain BisB5)).